We begin with the raw amino-acid sequence, 373 residues long: NAD-dependent protein deacylase SRT2 (373 aa).

The transit peptide at 1–47 (MNMRRVFGGVSTDLFPSRSMYRPLQSGGNLVMLFKGCRRFVRTTCRV) directs the protein to the mitochondrion. Residues 75–373 (DPPNMEDIHK…DVGSLSVPAL (299 aa)) form the Deacetylase sirtuin-type domain. NAD(+) contacts are provided by residues 100–120 (GAGVSTECGIPDYRSPNGAYS) and 179–182 (QNVD). The Proton acceptor role is filled by His-196. 4 residues coordinate Zn(2+): Cys-204, Cys-207, Cys-271, and Cys-274. NAD(+) is bound by residues 311–313 (GSS), 337–339 (NIG), and Val-355.

The protein belongs to the sirtuin family. Class II subfamily. As to quaternary structure, binds to the promoter region of genes influenced by ethylene. Interacts with ENAP1; this interaction is enhanced in the presence of ethylene. It depends on Zn(2+) as a cofactor.

It is found in the mitochondrion matrix. The protein resides in the nucleus. The catalysed reaction is N(6)-acetyl-L-lysyl-[protein] + NAD(+) + H2O = 2''-O-acetyl-ADP-D-ribose + nicotinamide + L-lysyl-[protein]. NAD-dependent protein deacylase. Catalyzes the NAD-dependent hydrolysis of acyl groups from lysine residues. Involved in responses to ethylene leading to the transcriptional repression of some ethylene-responsive genes via the regulation of histone acetylation H3K9Ac. Negatively regulates plant basal defense against plant pathogens, possibly by suppressing salicylic acid biosynthesis. This chain is NAD-dependent protein deacylase SRT2, found in Arabidopsis thaliana (Mouse-ear cress).